Here is a 992-residue protein sequence, read N- to C-terminus: Ankyrin repeat domain-containing protein 18A (992 aa).

ANK repeat units follow at residues 67 to 96, 100 to 129, 133 to 162, 166 to 195, and 199 to 228; these read KDRTVLHLACAHGRVQVVTLLLHRRCQIDI, LNRTPLMKAVHSQEEACAIVLLECGANPNI, YGNTALHYAVYNKGTSLAERLLSHHANIEA, EGNTPLLFAINSRRQHMVEFLLKNQANIHA, and FKRTALILAVQHNLSSIVTLLLQQNIRISS. Residues 262 to 320 are disordered; it reads NHLRNDNQETAAMKPANLKKRKERAKAEHNLKVASEEKQERLQRSENKQPQDSQSYGKK. 4 coiled-coil regions span residues 278 to 310, 378 to 618, 683 to 713, and 743 to 899; these read NLKKRKERAKAEHNLKVASEEKQERLQRSENKQ, KMIT…AERE, ISLLNYTADQIRKKNRELEEEATGYKKCLEM, and FKKL…EAFA. The span at 286-310 shows a compositional bias: basic and acidic residues; that stretch reads AKAEHNLKVASEEKQERLQRSENKQ.

This Homo sapiens (Human) protein is Ankyrin repeat domain-containing protein 18A (ANKRD18A).